A 433-amino-acid chain; its full sequence is Glutamate-1-semialdehyde 2,1-aminomutase (433 aa).

N6-(pyridoxal phosphate)lysine is present on Lys-273.

It belongs to the class-III pyridoxal-phosphate-dependent aminotransferase family. HemL subfamily. Homodimer. It depends on pyridoxal 5'-phosphate as a cofactor.

Its subcellular location is the cytoplasm. The catalysed reaction is (S)-4-amino-5-oxopentanoate = 5-aminolevulinate. The protein operates within porphyrin-containing compound metabolism; protoporphyrin-IX biosynthesis; 5-aminolevulinate from L-glutamyl-tRNA(Glu): step 2/2. In Polynucleobacter necessarius subsp. necessarius (strain STIR1), this protein is Glutamate-1-semialdehyde 2,1-aminomutase.